A 252-amino-acid chain; its full sequence is Triosephosphate isomerase (252 aa).

Substrate is bound at residue 10 to 12 (NWK). The Electrophile role is filled by His-96. Residue Glu-168 is the Proton acceptor of the active site. Substrate is bound by residues Gly-174, Ser-214, and 235 to 236 (GG).

It belongs to the triosephosphate isomerase family. As to quaternary structure, homodimer.

It localises to the cytoplasm. It carries out the reaction D-glyceraldehyde 3-phosphate = dihydroxyacetone phosphate. The protein operates within carbohydrate biosynthesis; gluconeogenesis. It functions in the pathway carbohydrate degradation; glycolysis; D-glyceraldehyde 3-phosphate from glycerone phosphate: step 1/1. In terms of biological role, involved in the gluconeogenesis. Catalyzes stereospecifically the conversion of dihydroxyacetone phosphate (DHAP) to D-glyceraldehyde-3-phosphate (G3P). The protein is Triosephosphate isomerase of Streptococcus pyogenes serotype M1.